The following is a 227-amino-acid chain: dTTP/UTP pyrophosphatase (227 aa).

Residues 1–21 (MNDLPRAELPGSGSPNPESLI) are disordered. D87 functions as the Proton acceptor in the catalytic mechanism.

This sequence belongs to the Maf family. YhdE subfamily. It depends on a divalent metal cation as a cofactor.

The protein localises to the cytoplasm. It catalyses the reaction dTTP + H2O = dTMP + diphosphate + H(+). It carries out the reaction UTP + H2O = UMP + diphosphate + H(+). Functionally, nucleoside triphosphate pyrophosphatase that hydrolyzes dTTP and UTP. May have a dual role in cell division arrest and in preventing the incorporation of modified nucleotides into cellular nucleic acids. The chain is dTTP/UTP pyrophosphatase from Rhodopirellula baltica (strain DSM 10527 / NCIMB 13988 / SH1).